Reading from the N-terminus, the 572-residue chain is Proline--tRNA ligase (572 aa).

Belongs to the class-II aminoacyl-tRNA synthetase family. ProS type 1 subfamily. In terms of assembly, homodimer.

It is found in the cytoplasm. It carries out the reaction tRNA(Pro) + L-proline + ATP = L-prolyl-tRNA(Pro) + AMP + diphosphate. Functionally, catalyzes the attachment of proline to tRNA(Pro) in a two-step reaction: proline is first activated by ATP to form Pro-AMP and then transferred to the acceptor end of tRNA(Pro). As ProRS can inadvertently accommodate and process non-cognate amino acids such as alanine and cysteine, to avoid such errors it has two additional distinct editing activities against alanine. One activity is designated as 'pretransfer' editing and involves the tRNA(Pro)-independent hydrolysis of activated Ala-AMP. The other activity is designated 'posttransfer' editing and involves deacylation of mischarged Ala-tRNA(Pro). The misacylated Cys-tRNA(Pro) is not edited by ProRS. This chain is Proline--tRNA ligase, found in Shewanella amazonensis (strain ATCC BAA-1098 / SB2B).